A 665-amino-acid chain; its full sequence is Dual specificity protein phosphatase 16 (665 aa).

Residues 22 to 137 (GTEKVLLIDS…FSRCFPGLCE (116 aa)) enclose the Rhodanese domain. Lys-55 is subject to (Microbial infection) N6-acetyllysine; by EIS. One can recognise a Tyrosine-protein phosphatase domain in the interval 158–300 (GPTRILPNLY…LLDYEKKIKN (143 aa)). Cys-244 serves as the catalytic Phosphocysteine intermediate. The segment at 321–368 (EPVPAVSEGGQKSETPLSPPCADSATSEAAGQRPVHPASVPSVPSVQP) is disordered. Low complexity predominate over residues 354–368 (PVHPASVPSVPSVQP). The residue at position 446 (Ser-446) is a Phosphoserine; by MAPK1. Composition is skewed to polar residues over residues 449 to 458 (QELSEQTPET) and 487 to 499 (VRTSSSGTAQRSL). Disordered regions lie at residues 449-505 (QELS…PLHR) and 597-665 (VRRR…IEVS). Residue Ser-501 is modified to Phosphoserine. A compositionally biased stretch (basic and acidic residues) spans 602 to 622 (KPSDRADSRRSWHEESPFEKQ).

The protein belongs to the protein-tyrosine phosphatase family. Non-receptor class dual specificity subfamily. In terms of assembly, interacts with ARRB2. Post-translationally, phosphorylated at Ser-446 by MAPK1/ERK2, which prevents its degradation, and thereby stabilizes it and blocks JNK MAPK activity. In terms of processing, (Microbial infection) Acetylated at Lys-55 by the M.tuberculosis Eis protein; this leads to the inhibition of JNK-dependent autophagy, phagosome maturation, and ROS (reactive oxygen species) generation for enhanced intracellular survival of M.tuberculosis.

The protein localises to the cytoplasm. It is found in the nucleus. It localises to the cytoplasmic vesicle. The catalysed reaction is O-phospho-L-tyrosyl-[protein] + H2O = L-tyrosyl-[protein] + phosphate. The enzyme catalyses O-phospho-L-seryl-[protein] + H2O = L-seryl-[protein] + phosphate. It carries out the reaction O-phospho-L-threonyl-[protein] + H2O = L-threonyl-[protein] + phosphate. Its function is as follows. Dual specificity protein phosphatase involved in the inactivation of MAP kinases. Dephosphorylates MAPK10 bound to ARRB2. This Homo sapiens (Human) protein is Dual specificity protein phosphatase 16 (DUSP16).